The primary structure comprises 368 residues: Cytochrome P450 119 (368 aa).

6 residues coordinate heme: His-76, Arg-80, Thr-257, Arg-259, His-315, and Cys-317.

This sequence belongs to the cytochrome P450 family. It depends on heme as a cofactor.

It is found in the cytoplasm. It carries out the reaction 2 a phenolic donor + H2O2 = 2 a phenolic radical donor + 2 H2O. The endogenous substrate is not known. In vitro, catalyzes the H(2)O(2)-dependent epoxidation of styrene, cis-beta-methylstyrene, and cis-stilbene with retention of stereochemistry. Is able to use cumene hydroperoxide (CHP) or tert-butyl hydroperoxide (TBHP) instead of H(2)O(2) as the electron acceptor. Can also hydroxylate fatty acids such as lauric acid. This chain is Cytochrome P450 119 (cyp119), found in Sulfolobus acidocaldarius (strain ATCC 33909 / DSM 639 / JCM 8929 / NBRC 15157 / NCIMB 11770).